Reading from the N-terminus, the 553-residue chain is Methyl-coenzyme M reductase I subunit alpha (553 aa).

Coenzyme F430 is bound at residue Q150. Residues R228, 259 to 260 (KH), and R273 contribute to the coenzyme B site. At R274 the chain carries 5-methylarginine. 2 residues coordinate coenzyme M: Y335 and Y447.

Belongs to the methyl-coenzyme M reductase alpha subunit family. MCR is a hexamer of two alpha, two beta, and two gamma chains, forming a dimer of heterotrimers. It depends on coenzyme F430 as a cofactor. In terms of processing, is methylated on C5 of Arg-274 by the methyltransferase MJ0841. This post-translational methylation, despite being not essential in vivo, plays a role for the stability and structural integrity of MCR.

Its subcellular location is the cytoplasm. It catalyses the reaction coenzyme B + methyl-coenzyme M = methane + coenzyme M-coenzyme B heterodisulfide. It participates in one-carbon metabolism; methyl-coenzyme M reduction; methane from methyl-coenzyme M: step 1/1. In terms of biological role, component of the methyl-coenzyme M reductase (MCR) I that catalyzes the reductive cleavage of methyl-coenzyme M (CoM-S-CH3 or 2-(methylthio)ethanesulfonate) using coenzyme B (CoB or 7-mercaptoheptanoylthreonine phosphate) as reductant which results in the production of methane and the mixed heterodisulfide of CoB and CoM (CoM-S-S-CoB). This is the final step in methanogenesis. The polypeptide is Methyl-coenzyme M reductase I subunit alpha (mcrA) (Methanocaldococcus jannaschii (strain ATCC 43067 / DSM 2661 / JAL-1 / JCM 10045 / NBRC 100440) (Methanococcus jannaschii)).